Reading from the N-terminus, the 1374-residue chain is DNA-directed RNA polymerase subunit beta (1374 aa).

It belongs to the RNA polymerase beta chain family. In terms of assembly, the RNAP catalytic core consists of 2 alpha, 1 beta, 1 beta' and 1 omega subunit. When a sigma factor is associated with the core the holoenzyme is formed, which can initiate transcription.

It catalyses the reaction RNA(n) + a ribonucleoside 5'-triphosphate = RNA(n+1) + diphosphate. Functionally, DNA-dependent RNA polymerase catalyzes the transcription of DNA into RNA using the four ribonucleoside triphosphates as substrates. The chain is DNA-directed RNA polymerase subunit beta from Acidovorax ebreus (strain TPSY) (Diaphorobacter sp. (strain TPSY)).